The sequence spans 428 residues: E3 ubiquitin-protein ligase RNF128 (428 aa).

Positions Met1 to Gly38 are cleaved as a signal peptide. Asn48, Asn59, and Asn101 each carry an N-linked (GlcNAc...) asparagine glycan. In terms of domain architecture, PA spans Ser75–Ile183. Residues Ile208–Phe228 form a helical membrane-spanning segment. An RING-type; atypical zinc finger spans residues Cys277–Lys318. A disordered region spans residues Ile346 to Ser428. Over residues Thr416–Ser428 the composition is skewed to basic and acidic residues.

In terms of processing, auto-ubiquitinated. Controls the development of T-cell clonal anergy by ubiquitination.

It is found in the cytoplasm. Its subcellular location is the endomembrane system. The protein localises to the cytoskeleton. It localises to the perinuclear region. It carries out the reaction S-ubiquitinyl-[E2 ubiquitin-conjugating enzyme]-L-cysteine + [acceptor protein]-L-lysine = [E2 ubiquitin-conjugating enzyme]-L-cysteine + N(6)-ubiquitinyl-[acceptor protein]-L-lysine.. The protein operates within protein modification; protein ubiquitination. In terms of biological role, E3 ubiquitin-protein ligase that catalyzes 'Lys-27', 'Lys-48'- or 'Lys-63'-linked polyubiquitin chains formation and plays a role in different biological processes such as modulation of immune response, cytoskeletal dynamics or protein homeostasis. Inhibits IL2 and IL4 transcription, thereby playing an important role in the induction of the anergic phenotype, a long-term stable state of T-lymphocyte unresponsiveness to antigenic stimulation associated with the blockade of interleukin production. Ubiquitinates ARPC5 with 'Lys-48' linkages and COR1A with 'Lys-63' linkages leading to their degradation, down-regulation of these cytoskeletal components results in impaired lamellipodium formation and reduced accumulation of F-actin at the immunological synapse. Functions in the patterning of the dorsal ectoderm; sensitizes ectoderm to respond to neural-inducing signals. Plays a positive role in innate immune response by promoting 'Lys-63'-linked ubiquitination of TBK1 after RNA- or DNA-virus infection. Regulates alveolar macrophage activation and neutrophil infiltration by interacting with TLR4, targeting it for degradation, and inhibiting NF-kappa-B activation, hence decreasing pro-inflammatory cytokines. Negatively regulates the IL-3/STAT5 signaling pathway by facilitating 'Lys-27'-linked polyubiquitination of IL3RA leading to its degradation via lysosomal pathway. Directly regulates the N-glycosylation process in the endoplasmic reticulum by targeting the glycosyl-transferase RPN1 for ubiquitination and degradation. Other substrates targeted for degradation by RNF128 include transmembrane proteins CD40L, CD83 or the tetraspanin CD151. This chain is E3 ubiquitin-protein ligase RNF128 (RNF128), found in Pongo abelii (Sumatran orangutan).